Here is a 205-residue protein sequence, read N- to C-terminus: Thiamine-phosphate synthase (205 aa).

Residues 35–39 (QYRDK) and Asn67 contribute to the 4-amino-2-methyl-5-(diphosphooxymethyl)pyrimidine site. The Mg(2+) site is built by Asp68 and Asp86. Position 105 (Thr105) interacts with 4-amino-2-methyl-5-(diphosphooxymethyl)pyrimidine. 132-134 (SLT) contributes to the 2-[(2R,5Z)-2-carboxy-4-methylthiazol-5(2H)-ylidene]ethyl phosphate binding site. Lys135 lines the 4-amino-2-methyl-5-(diphosphooxymethyl)pyrimidine pocket. Residue Gly162 coordinates 2-[(2R,5Z)-2-carboxy-4-methylthiazol-5(2H)-ylidene]ethyl phosphate.

The protein belongs to the thiamine-phosphate synthase family. Mg(2+) serves as cofactor.

The enzyme catalyses 2-[(2R,5Z)-2-carboxy-4-methylthiazol-5(2H)-ylidene]ethyl phosphate + 4-amino-2-methyl-5-(diphosphooxymethyl)pyrimidine + 2 H(+) = thiamine phosphate + CO2 + diphosphate. It carries out the reaction 2-(2-carboxy-4-methylthiazol-5-yl)ethyl phosphate + 4-amino-2-methyl-5-(diphosphooxymethyl)pyrimidine + 2 H(+) = thiamine phosphate + CO2 + diphosphate. It catalyses the reaction 4-methyl-5-(2-phosphooxyethyl)-thiazole + 4-amino-2-methyl-5-(diphosphooxymethyl)pyrimidine + H(+) = thiamine phosphate + diphosphate. It participates in cofactor biosynthesis; thiamine diphosphate biosynthesis; thiamine phosphate from 4-amino-2-methyl-5-diphosphomethylpyrimidine and 4-methyl-5-(2-phosphoethyl)-thiazole: step 1/1. Its function is as follows. Condenses 4-methyl-5-(beta-hydroxyethyl)thiazole monophosphate (THZ-P) and 2-methyl-4-amino-5-hydroxymethyl pyrimidine pyrophosphate (HMP-PP) to form thiamine monophosphate (TMP). In Pseudomonas savastanoi pv. phaseolicola (strain 1448A / Race 6) (Pseudomonas syringae pv. phaseolicola (strain 1448A / Race 6)), this protein is Thiamine-phosphate synthase.